The chain runs to 597 residues: Aspartate--tRNA(Asp/Asn) ligase (597 aa).

Glu-175 provides a ligand contact to L-aspartate. The segment at 199–202 (QQYK) is aspartate. L-aspartate is bound by residues Arg-221 and His-456. 221–223 (RDE) is an ATP binding site. Glu-490 lines the ATP pocket. Arg-497 contributes to the L-aspartate binding site. 542–545 (GVDR) provides a ligand contact to ATP.

This sequence belongs to the class-II aminoacyl-tRNA synthetase family. Type 1 subfamily. In terms of assembly, homodimer.

It localises to the cytoplasm. The enzyme catalyses tRNA(Asx) + L-aspartate + ATP = L-aspartyl-tRNA(Asx) + AMP + diphosphate. Aspartyl-tRNA synthetase with relaxed tRNA specificity since it is able to aspartylate not only its cognate tRNA(Asp) but also tRNA(Asn). Reaction proceeds in two steps: L-aspartate is first activated by ATP to form Asp-AMP and then transferred to the acceptor end of tRNA(Asp/Asn). The protein is Aspartate--tRNA(Asp/Asn) ligase of Beijerinckia indica subsp. indica (strain ATCC 9039 / DSM 1715 / NCIMB 8712).